Consider the following 398-residue polypeptide: Phosphoglycerate kinase (398 aa).

Substrate-binding positions include 21 to 23, arginine 36, 59 to 62, arginine 119, and arginine 157; these read DFN and HLGR. ATP is bound by residues lysine 208, glycine 296, glutamate 327, and 354 to 357; that span reads GGDS.

The protein belongs to the phosphoglycerate kinase family. Monomer.

The protein resides in the cytoplasm. It carries out the reaction (2R)-3-phosphoglycerate + ATP = (2R)-3-phospho-glyceroyl phosphate + ADP. It functions in the pathway carbohydrate degradation; glycolysis; pyruvate from D-glyceraldehyde 3-phosphate: step 2/5. In Streptococcus uberis (strain ATCC BAA-854 / 0140J), this protein is Phosphoglycerate kinase.